The primary structure comprises 561 residues: Acyl-CoA ligase ppsA (561 aa).

Asn21 carries N-linked (GlcNAc...) asparagine glycosylation. Residues 71 to 91 form a helical membrane-spanning segment; sequence SILYPALFLAIVGVGAVYMGA. AMP is bound at residue 203 to 214; it reads MFATSGTSGLPK. Asn396 is a glycosylation site (N-linked (GlcNAc...) asparagine). Residues 462 to 540 are AMP-binding; sequence ELEAELAQHP…DSIPRNSGGK (79 aa).

Belongs to the ATP-dependent AMP-binding enzyme family.

It is found in the membrane. It carries out the reaction acetate + ATP + CoA = acetyl-CoA + ADP + phosphate. It catalyses the reaction propanoate + ATP + CoA = propanoyl-CoA + AMP + diphosphate. It functions in the pathway secondary metabolite biosynthesis. In terms of biological role, acyl-CoA ligase; part of the gene cluster that mediates the biosynthesis of 2,4'-dihydroxy-3'-methoxypropiophenone. The first step of the pathway is the conversion of acetate into acetyl-CoA by the acyl-CoA ligase ppsA. Acetyl-CoA is then used as a starter unit by the polyketide synthase ppsB and condensed with 4 malonyl-CoA unit to produce the pentaketide backbone. During polyketide extension, the polykedite chain is probably reduced and dehydrated by the KR and PT domains, respectively. O-methylation seems to be catalyzed by an unknown methyltransferase rather than by the CMeT domain of ppsB. Two hydroxylations and one further decarboxylation step catalyzed by yet unknown enzymes are then required to yield 4'-hydroxy-3'-methoxypropiophenone. PpsC functions as a carrier protein to transport 4'-hydroxy-3'-methoxypropiophenone to a specific cell compartment in which 4'-hydroxy-3'-methoxypropiophenone is hydroxylated to 2,4'-dihydroxy-3'-methoxypropiophenone by a still to be identified enzyme. This Aspergillus oryzae (strain ATCC 42149 / RIB 40) (Yellow koji mold) protein is Acyl-CoA ligase ppsA.